Consider the following 369-residue polypeptide: RNA pseudouridine synthase 5 (369 aa).

One can recognise an S4 RNA-binding domain in the interval 47-104 (APLLGWIQRIQNGQIQIDGEVVKDPNTLLRSGSKLVYSRLPWKEPDTPYSLEVLYEDD).

This sequence belongs to the pseudouridine synthase RluA family.

It catalyses the reaction a uridine in RNA = a pseudouridine in RNA. The sequence is that of RNA pseudouridine synthase 5 from Arabidopsis thaliana (Mouse-ear cress).